Consider the following 510-residue polypeptide: GMP synthase [glutamine-hydrolyzing] (510 aa).

A Glutamine amidotransferase type-1 domain is found at 5-195; the sequence is TVVVLDFGGQ…LFEICGLRGD (191 aa). Catalysis depends on Cys-82, which acts as the Nucleophile. Active-site residues include His-169 and Glu-171. Residues 196–385 form the GMPS ATP-PPase domain; sequence WDLSDFISEA…LGIPAEILWR (190 aa). 223-229 is a binding site for ATP; sequence SGGVDSS.

As to quaternary structure, homodimer.

It carries out the reaction XMP + L-glutamine + ATP + H2O = GMP + L-glutamate + AMP + diphosphate + 2 H(+). The protein operates within purine metabolism; GMP biosynthesis; GMP from XMP (L-Gln route): step 1/1. Functionally, catalyzes the synthesis of GMP from XMP. In Syntrophomonas wolfei subsp. wolfei (strain DSM 2245B / Goettingen), this protein is GMP synthase [glutamine-hydrolyzing].